Reading from the N-terminus, the 146-residue chain is Ribonuclease H (146 aa).

Residues 1–138 (MYAWTDGACR…ADALANRGID (138 aa)) form the RNase H type-1 domain. Residues aspartate 6, glutamate 44, aspartate 66, and aspartate 130 each coordinate Mg(2+).

The protein belongs to the RNase H family. Monomer. It depends on Mg(2+) as a cofactor.

Its subcellular location is the cytoplasm. The catalysed reaction is Endonucleolytic cleavage to 5'-phosphomonoester.. Endonuclease that specifically degrades the RNA of RNA-DNA hybrids. This is Ribonuclease H from Alkalilimnicola ehrlichii (strain ATCC BAA-1101 / DSM 17681 / MLHE-1).